The following is a 1581-amino-acid chain: Ankyrin repeat domain-containing protein 26 (1581 aa).

Residues 1-22 form a disordered region; sequence MKKIFGFRSKGPSPLGPSARPR. Residue Ser13 is modified to Phosphoserine. ANK repeat units lie at residues 46-76, 80-109, 113-142, 146-175, and 179-208; these read KDMGKIHKAASVGDVAKVQHILILGKSGVND, KDRTALHLACAYGHPEVVTLLVERKCEIDA, ESSTALIKAVQCQEEECAAILLDHGADPNV, SGNTALHYAVYSENTSMAAKLLAHNANIEA, and DDLTPMLLAVKENKQHIVEFLVKKKASIHA. Disordered regions lie at residues 225–270, 299–343, 361–381, and 488–652; these read RLQR…FDNK, LDNG…PVEG, SASQEQPNHDNLTRADGWHKS, and VLNK…QTAA. Polar residues predominate over residues 229-250; the sequence is SENSNPVDNGSEDGSLTRSYNT. Phosphoserine occurs at positions 239 and 260. A compositionally biased stretch (acidic residues) spans 308-319; that stretch reads SDSPSESEDAIE. Over residues 327–337 the composition is skewed to polar residues; it reads RVQTLSPSRQS. Positions 367–381 are enriched in basic and acidic residues; the sequence is PNHDNLTRADGWHKS. Positions 491-504 are enriched in polar residues; the sequence is KTETVGMTDAQTFK. Basic and acidic residues-rich tracts occupy residues 505 to 516, 524 to 538, and 585 to 601; these read SEPESVSREEQT, SQQKVEEKRKYKNNE, and KEAKKMENEKWVSREPA. Ser511 carries the post-translational modification Phosphoserine. Coiled coils occupy residues 715 to 845, 876 to 1345, 1396 to 1470, and 1521 to 1550; these read RSHC…NARM, HEKE…MVEH, RSQM…RSLL, and LTKMHQELEKSINRELKEATAELESEFCRV.

In terms of assembly, interacts with TRIO. Interacts with GPS2. Interacts with CCDC85B. Interacts with HMMR. As to expression, widely expressed. Expressed in the arcuate and ventromedial nuclei within the hypothalamus and in the ependyma and the circumventricular organs (at protein level).

It localises to the cytoplasm. The protein localises to the cytosol. Its function is as follows. Acts as a regulator of adipogenesis. Involved in the regulation of the feeding behavior. The protein is Ankyrin repeat domain-containing protein 26 (Ankrd26) of Mus musculus (Mouse).